Reading from the N-terminus, the 458-residue chain is UDP-N-acetylmuramate--L-alanine ligase (458 aa).

Residue 119–125 (GTHGKTT) coordinates ATP.

The protein belongs to the MurCDEF family.

The protein localises to the cytoplasm. The catalysed reaction is UDP-N-acetyl-alpha-D-muramate + L-alanine + ATP = UDP-N-acetyl-alpha-D-muramoyl-L-alanine + ADP + phosphate + H(+). It functions in the pathway cell wall biogenesis; peptidoglycan biosynthesis. Its function is as follows. Cell wall formation. The chain is UDP-N-acetylmuramate--L-alanine ligase from Phocaeicola vulgatus (strain ATCC 8482 / DSM 1447 / JCM 5826 / CCUG 4940 / NBRC 14291 / NCTC 11154) (Bacteroides vulgatus).